A 239-amino-acid chain; its full sequence is Ribosomal RNA small subunit methyltransferase G (239 aa).

S-adenosyl-L-methionine-binding positions include G77, F82, 128–129 (AE), and R147. Residues 219–239 (RKTPKKYPRKPGTPNKLPIEK) are disordered.

Belongs to the methyltransferase superfamily. RNA methyltransferase RsmG family.

It localises to the cytoplasm. Its function is as follows. Specifically methylates the N7 position of guanine in position 535 of 16S rRNA. This is Ribosomal RNA small subunit methyltransferase G from Bacillus cytotoxicus (strain DSM 22905 / CIP 110041 / 391-98 / NVH 391-98).